Consider the following 394-residue polypeptide: Elongation factor Tu (394 aa).

Positions 10-204 constitute a tr-type G domain; it reads KPHVNVGTIG…ALDSYIPEPQ (195 aa). A G1 region spans residues 19–26; it reads GHVDHGKT. 19-26 serves as a coordination point for GTP; that stretch reads GHVDHGKT. Thr-26 contacts Mg(2+). Positions 60-64 are G2; the sequence is GITIN. The tract at residues 81–84 is G3; the sequence is DCPG. GTP is bound by residues 81–85 and 136–139; these read DCPGH and NKCD. Positions 136-139 are G4; that stretch reads NKCD. Residues 174–176 form a G5 region; it reads SAL.

The protein belongs to the TRAFAC class translation factor GTPase superfamily. Classic translation factor GTPase family. EF-Tu/EF-1A subfamily. In terms of assembly, monomer.

The protein localises to the cytoplasm. It carries out the reaction GTP + H2O = GDP + phosphate + H(+). Functionally, GTP hydrolase that promotes the GTP-dependent binding of aminoacyl-tRNA to the A-site of ribosomes during protein biosynthesis. The chain is Elongation factor Tu from Shewanella putrefaciens (Pseudomonas putrefaciens).